Consider the following 515-residue polypeptide: uncharacterized protein (515 aa).

Transmembrane regions (helical) follow at residues 1–21 (MSFV…LAGI), 165–185 (IGGP…GLLF), and 199–219 (GPVG…GLFG). One can recognise a PE domain in the interval 1-93 (MSFVVAAPEV…AGAYAGAEAA (93 aa)). A compositionally biased stretch (gly residues) spans 349–360 (GGTLIGNGGDGG). Disordered regions lie at residues 349–368 (GGTL…TDGF) and 463–515 (GVSG…SPGG).

Belongs to the mycobacterial PE family. PGRS subfamily.

Its subcellular location is the cell membrane. This is an uncharacterized protein from Mycobacterium tuberculosis (strain CDC 1551 / Oshkosh).